We begin with the raw amino-acid sequence, 460 residues long: Transcription factor TGA10 (460 aa).

Over residues 1–11 the composition is skewed to basic residues; that stretch reads MQGHHQNHHQH. Disordered stretches follow at residues 1-29 and 43-163; these read MQGH…NKDG and LDGQ…PKTL. Residues 12-21 show a composition bias toward low complexity; that stretch reads LSSSSATSSH. Polar residues-rich tracts occupy residues 65-81 and 121-136; these read TQNL…NIFP and DLTN…QGSK. Over residues 138–162 the composition is skewed to basic and acidic residues; it reads IKKEGNRKGLASSDHDIPKSSDPKT. In terms of domain architecture, bZIP spans 159 to 203; the sequence is DPKTLRRLAQNREAARKSRLRKKAYVQQLESCRIKLTQLEQEIQR. Residues 161 to 181 are basic motif; sequence KTLRRLAQNREAARKSRLRKK. Residues 163–170 carry the Nuclear localization signal motif; that stretch reads LRRLAQNR. A leucine-zipper region spans residues 187-201; it reads LESCRIKLTQLEQEI. Positions 236 to 455 constitute a DOG1 domain; sequence AAVFDMEYAR…QALSSLWLAR (220 aa).

This sequence belongs to the bZIP family. Homodimer. Binds DNA as a dimer. Interacts with floral glutaredoxins GRXC7/ROXY1 and GRXC8/ROXY2 in the nucleus. Interacts with TGA1, TGA2, TGA3, TGA4, TGA5, TGA6, TGA7, TGA9 and PAN. Expressed at low levels in inflorescence apex and flowers.

It localises to the nucleus. Together with TGA9, basic leucine-zipper transcription factor required for anther development, probably via the activation of SPL expression in anthers and via the regulation of genes with functions in early and middle tapetal development. Required for signaling responses to pathogen-associated molecular patterns (PAMPs) such as flg22 that involves chloroplastic reactive oxygen species (ROS) production and subsequent expression of H(2)O(2)-responsive genes. This chain is Transcription factor TGA10, found in Arabidopsis thaliana (Mouse-ear cress).